A 486-amino-acid polypeptide reads, in one-letter code: Vanillin dehydrogenase (486 aa).

Residues 210-211 (GP), 230-231 (GS), and 252-254 (ELG) each bind NAD(+). Glu252 acts as the Proton acceptor in catalysis. Residue Cys286 is the Nucleophile of the active site. 380 to 382 (EVF) provides a ligand contact to NAD(+).

Belongs to the aldehyde dehydrogenase family.

The catalysed reaction is vanillin + NAD(+) + H2O = vanillate + NADH + 2 H(+). Functionally, catalyzes NAD(+)-dependent oxidation of vanillin to vanillate. Also oxidizes other aromatic aldehydes including benzaldehyde, coniferyl aldehyde and cinnamaldehyde, but has a preference for vanillin. Not active with NADP(+). Involved in the degradation pathway of lignin-derived aromatic compounds of plant cell walls. Catalyzes the conversion of vanillin to vanillate due to toxicity of vanillin to the cells. In Amycolatopsis sp. (strain ATCC 39116 / 75iv2), this protein is Vanillin dehydrogenase.